A 686-amino-acid chain; its full sequence is Alpha-amylase 1 (686 aa).

Glu-125 functions as the Nucleophile in the catalytic mechanism. Catalysis depends on Asp-216, which acts as the Proton donor.

This sequence belongs to the glycosyl hydrolase 57 family.

Its subcellular location is the cytoplasm. It catalyses the reaction Endohydrolysis of (1-&gt;4)-alpha-D-glucosidic linkages in polysaccharides containing three or more (1-&gt;4)-alpha-linked D-glucose units.. Its function is as follows. This amylase is a highly liquefying-type: oligomers appeared at the beginning of incubation, followed by a graded decrease in the amounts of maltotriose, maltose and glucose in prolonged incubation. The sequence is that of Alpha-amylase 1 (amyA) from Dictyoglomus thermophilum (strain ATCC 35947 / DSM 3960 / H-6-12).